Reading from the N-terminus, the 486-residue chain is MTDLIKLTIAQSHKLLKERKLSSAELTRAHLDRIEKLEPEIKAFMTVCPESALAQAKAADEAIKQGHIRPLTGIPMALKDVLCTKGIRTTCSSRMLENFVPPYNAHVVDKLAEEGAVLLGKTNMDEFAMGSSTENSAFFTTHNPWNTAKVPGGSSGGSAACVAASEAVFSLGSDTGGSIRQPASFCSVTGLKPSYGMVSRYGLVAFASSLDQIGPFTKDVLDCALVMNAIAGFDDRDSTSVPQTAPDFSSCLDGDIKGFKLGVPKEYFSHNMRADIAEKINDALGVLSGLGASVDREVSLPHTPYALAVYYILAPSEASANLSRYDGVKYGYSYNQTENMWEAMEKTRAKGFGPEVKRRIMIGTYALSAGYYDAWYVKAQKVRTLISQEFNNAFEKYDALITPTTPNLPFSIGEKLSDPFEMYMCDTCTIPINIAGLPAISIPAGFVDGLPVGLQIIGKPFADQTIMRIAHAFQCATAWHKETPRL.

Active-site charge relay system residues include K79 and S154. S178 functions as the Acyl-ester intermediate in the catalytic mechanism.

The protein belongs to the amidase family. GatA subfamily. As to quaternary structure, heterotrimer of A, B and C subunits.

It carries out the reaction L-glutamyl-tRNA(Gln) + L-glutamine + ATP + H2O = L-glutaminyl-tRNA(Gln) + L-glutamate + ADP + phosphate + H(+). Allows the formation of correctly charged Gln-tRNA(Gln) through the transamidation of misacylated Glu-tRNA(Gln) in organisms which lack glutaminyl-tRNA synthetase. The reaction takes place in the presence of glutamine and ATP through an activated gamma-phospho-Glu-tRNA(Gln). This chain is Glutamyl-tRNA(Gln) amidotransferase subunit A, found in Dehalococcoides mccartyi (strain ATCC BAA-2266 / KCTC 15142 / 195) (Dehalococcoides ethenogenes (strain 195)).